The chain runs to 399 residues: Lipase member K (399 aa).

A signal peptide spans 1–19 (MWQLLAAACWMLLLGSMYG). The AB hydrolase-1 domain maps to 78 to 378 (PAVYLQHGLI…HYNHVDFYLG (301 aa)). Residue Ser-172 is the Nucleophile of the active site. Cys-246 and Cys-255 are joined by a disulfide. N-linked (GlcNAc...) asparagine glycosylation is found at Asn-271 and Asn-327. Active-site charge relay system residues include Asp-343 and His-372.

It belongs to the AB hydrolase superfamily. Lipase family. Exclusively expressed in the epidermis within the granular keratinocytes.

The protein localises to the secreted. Functionally, plays a highly specific role in the last step of keratinocyte differentiation. May have an essential function in lipid metabolism of the most differentiated epidermal layers. In Homo sapiens (Human), this protein is Lipase member K (LIPK).